Reading from the N-terminus, the 147-residue chain is Cyanate hydratase (147 aa).

Residues R88, E91, and S114 contribute to the active site.

This sequence belongs to the cyanase family.

The catalysed reaction is cyanate + hydrogencarbonate + 3 H(+) = NH4(+) + 2 CO2. Functionally, catalyzes the reaction of cyanate with bicarbonate to produce ammonia and carbon dioxide. This Ralstonia pickettii (strain 12J) protein is Cyanate hydratase.